The following is a 237-amino-acid chain: Probable transcriptional regulatory protein Fjoh_2560 (237 aa).

The protein belongs to the TACO1 family.

The protein localises to the cytoplasm. This chain is Probable transcriptional regulatory protein Fjoh_2560, found in Flavobacterium johnsoniae (strain ATCC 17061 / DSM 2064 / JCM 8514 / BCRC 14874 / CCUG 350202 / NBRC 14942 / NCIMB 11054 / UW101) (Cytophaga johnsonae).